The sequence spans 271 residues: 4-hydroxy-tetrahydrodipicolinate reductase (271 aa).

NAD(+) is bound by residues 11–16 (GGSGRM) and glutamate 37. Arginine 38 lines the NADP(+) pocket. NAD(+) is bound by residues 101 to 103 (GTT) and 125 to 128 (APNM). Histidine 158 serves as the catalytic Proton donor/acceptor. Position 159 (histidine 159) interacts with (S)-2,3,4,5-tetrahydrodipicolinate. The Proton donor role is filled by lysine 162. 168–169 (GT) is a binding site for (S)-2,3,4,5-tetrahydrodipicolinate.

This sequence belongs to the DapB family.

It localises to the cytoplasm. The enzyme catalyses (S)-2,3,4,5-tetrahydrodipicolinate + NAD(+) + H2O = (2S,4S)-4-hydroxy-2,3,4,5-tetrahydrodipicolinate + NADH + H(+). It carries out the reaction (S)-2,3,4,5-tetrahydrodipicolinate + NADP(+) + H2O = (2S,4S)-4-hydroxy-2,3,4,5-tetrahydrodipicolinate + NADPH + H(+). It participates in amino-acid biosynthesis; L-lysine biosynthesis via DAP pathway; (S)-tetrahydrodipicolinate from L-aspartate: step 4/4. Its function is as follows. Catalyzes the conversion of 4-hydroxy-tetrahydrodipicolinate (HTPA) to tetrahydrodipicolinate. In Shewanella halifaxensis (strain HAW-EB4), this protein is 4-hydroxy-tetrahydrodipicolinate reductase.